We begin with the raw amino-acid sequence, 197 residues long: V-type ATP synthase subunit E 2 (197 aa).

It belongs to the V-ATPase E subunit family.

Its function is as follows. Produces ATP from ADP in the presence of a proton gradient across the membrane. The sequence is that of V-type ATP synthase subunit E 2 from Clostridium tetani (strain Massachusetts / E88).